A 72-amino-acid chain; its full sequence is Heat-stable enterotoxin C (72 aa).

The N-terminal stretch at Met-1–Gly-19 is a signal peptide. Disulfide bonds link Cys-60–Cys-65, Cys-61–Cys-69, and Cys-64–Cys-72.

This sequence belongs to the heat-stable enterotoxin family.

The protein localises to the secreted. Toxin which activates the particulate form of guanylate cyclase and increases cyclic GMP levels within the host intestinal epithelial cells. Highly toxic. This is Heat-stable enterotoxin C (ystC) from Yersinia enterocolitica.